Here is a 138-residue protein sequence, read N- to C-terminus: Beta-galactosidase (138 aa).

Belongs to the glycosyl hydrolase 2 family.

It catalyses the reaction Hydrolysis of terminal non-reducing beta-D-galactose residues in beta-D-galactosides.. In Rhizobium radiobacter (Agrobacterium tumefaciens), this protein is Beta-galactosidase (lacZ).